A 304-amino-acid polypeptide reads, in one-letter code: HPr kinase/phosphorylase (304 aa).

Catalysis depends on residues histidine 136 and lysine 157. Residue 151–158 (GESGIGKS) coordinates ATP. A Mg(2+)-binding site is contributed by serine 158. Aspartate 175 acts as the Proton acceptor; for phosphorylation activity. Proton donor; for dephosphorylation activity in catalysis. The segment at 198-207 (LEVRGMGIID) is important for the catalytic mechanism of both phosphorylation and dephosphorylation. Glutamate 199 provides a ligand contact to Mg(2+). Arginine 240 is an active-site residue. The tract at residues 261-266 (PIRPGR) is important for the catalytic mechanism of dephosphorylation.

It belongs to the HPrK/P family. As to quaternary structure, homohexamer. Requires Mg(2+) as cofactor.

The enzyme catalyses [HPr protein]-L-serine + ATP = [HPr protein]-O-phospho-L-serine + ADP + H(+). It carries out the reaction [HPr protein]-O-phospho-L-serine + phosphate + H(+) = [HPr protein]-L-serine + diphosphate. Functionally, catalyzes the ATP- as well as the pyrophosphate-dependent phosphorylation of a specific serine residue in HPr, a phosphocarrier protein of the phosphoenolpyruvate-dependent sugar phosphotransferase system (PTS). HprK/P also catalyzes the pyrophosphate-producing, inorganic phosphate-dependent dephosphorylation (phosphorolysis) of seryl-phosphorylated HPr (P-Ser-HPr). The two antagonistic activities of HprK/P are regulated by several intracellular metabolites, which change their concentration in response to the absence or presence of rapidly metabolisable carbon sources (glucose, fructose, etc.) in the growth medium. Therefore, by controlling the phosphorylation state of HPr, HPrK/P is a sensor enzyme that plays a major role in the regulation of carbon metabolism and sugar transport: it mediates carbon catabolite repression (CCR), and regulates PTS-catalyzed carbohydrate uptake and inducer exclusion. The polypeptide is HPr kinase/phosphorylase (Clostridium acetobutylicum (strain ATCC 824 / DSM 792 / JCM 1419 / IAM 19013 / LMG 5710 / NBRC 13948 / NRRL B-527 / VKM B-1787 / 2291 / W)).